A 155-amino-acid chain; its full sequence is Small ribosomal subunit protein uS7cz/uS7cy (155 aa).

The protein belongs to the universal ribosomal protein uS7 family. Part of the 30S ribosomal subunit.

Its subcellular location is the plastid. The protein localises to the chloroplast. Functionally, one of the primary rRNA binding proteins, it binds directly to 16S rRNA where it nucleates assembly of the head domain of the 30S subunit. The polypeptide is Small ribosomal subunit protein uS7cz/uS7cy (rps7-A) (Piper cenocladum (Ant piper)).